The primary structure comprises 233 residues: Enolase-phosphatase E1 (233 aa).

The Mg(2+) site is built by aspartate 6 and glutamate 8. Substrate-binding positions include 128 to 129 and lysine 163; that span reads SS. Position 188 (aspartate 188) interacts with Mg(2+).

Belongs to the HAD-like hydrolase superfamily. MasA/MtnC family. As to quaternary structure, monomer. Mg(2+) is required as a cofactor.

It is found in the cytoplasm. Its subcellular location is the nucleus. It carries out the reaction 5-methylsulfanyl-2,3-dioxopentyl phosphate + H2O = 1,2-dihydroxy-5-(methylsulfanyl)pent-1-en-3-one + phosphate. The protein operates within amino-acid biosynthesis; L-methionine biosynthesis via salvage pathway; L-methionine from S-methyl-5-thio-alpha-D-ribose 1-phosphate: step 3/6. Its pathway is amino-acid biosynthesis; L-methionine biosynthesis via salvage pathway; L-methionine from S-methyl-5-thio-alpha-D-ribose 1-phosphate: step 4/6. Functionally, bifunctional enzyme that catalyzes the enolization of 2,3-diketo-5-methylthiopentyl-1-phosphate (DK-MTP-1-P) into the intermediate 2-hydroxy-3-keto-5-methylthiopentenyl-1-phosphate (HK-MTPenyl-1-P), which is then dephosphorylated to form the acireductone 1,2-dihydroxy-3-keto-5-methylthiopentene (DHK-MTPene). This chain is Enolase-phosphatase E1, found in Yarrowia lipolytica (strain CLIB 122 / E 150) (Yeast).